Reading from the N-terminus, the 228-residue chain is 7-cyano-7-deazaguanine synthase (228 aa).

9 to 19 is a binding site for ATP; that stretch reads LSGGPDSTTVL. 4 residues coordinate Zn(2+): Cys-193, Cys-203, Cys-206, and Cys-209.

It belongs to the QueC family. Zn(2+) is required as a cofactor.

It carries out the reaction 7-carboxy-7-deazaguanine + NH4(+) + ATP = 7-cyano-7-deazaguanine + ADP + phosphate + H2O + H(+). Its pathway is purine metabolism; 7-cyano-7-deazaguanine biosynthesis. Its function is as follows. Catalyzes the ATP-dependent conversion of 7-carboxy-7-deazaguanine (CDG) to 7-cyano-7-deazaguanine (preQ(0)). This is 7-cyano-7-deazaguanine synthase from Rickettsia peacockii (strain Rustic).